We begin with the raw amino-acid sequence, 76 residues long: Large ribosomal subunit protein uL29 (76 aa).

It belongs to the universal ribosomal protein uL29 family.

In Gloeothece citriformis (strain PCC 7424) (Cyanothece sp. (strain PCC 7424)), this protein is Large ribosomal subunit protein uL29.